Here is a 150-residue protein sequence, read N- to C-terminus: Retinal rod rhodopsin-sensitive cGMP 3',5'-cyclic phosphodiesterase subunit delta (150 aa).

A required for association with membranes region spans residues 144 to 150; sequence RVRLFYV.

This sequence belongs to the PDE6D/unc-119 family. Interacts with the prenylated catalytic subunits of PDE6, an oligomer composed of two catalytic chains (PDE6A and PDE6B) and two inhibitory chains (gamma); has no effect on enzyme activity but promotes the release of the prenylated enzyme from cell membrane. Interacts with prenylated GRK1 and GRK7. Interacts with prenylated INPP5E. Interacts with prenylated Ras family members, including HRAS, KRAS, NRAS, RAP2A, RAP2C and RHEB. Interacts with RAB13 (prenylated form); dissociates RAB13 from membranes. Interacts with RAB28 (prenylated form); the interaction promotes RAB28 delivery to the photoreceptor outer segments. Interacts with RPGR. Interacts with ARL2. Interacts with ARL3; the interaction occurs specifically with the GTP-bound form of ARL3. Interaction with ARL2 and ARL3 promotes release of farnesylated cargo proteins. As to expression, detected in retina photoreceptor cells, especially in rods (at protein level). Detected in retina, brain and adrenal gland.

It is found in the cytoplasm. Its subcellular location is the cytosol. It localises to the cytoplasmic vesicle membrane. The protein resides in the cytoskeleton. The protein localises to the cilium basal body. Promotes the release of prenylated target proteins from cellular membranes. Modulates the activity of prenylated or palmitoylated Ras family members by regulating their subcellular location. Required for normal ciliary targeting of farnesylated target proteins, such as INPP5E. Modulates the subcellular location of target proteins by acting as a GTP specific dissociation inhibitor (GDI). Required for RAB28 localization to the cone cell outer segments in the retina. Increases the affinity of ARL3 for GTP by several orders of magnitude. Stabilizes ARL3-GTP by decreasing the nucleotide dissociation rate. The protein is Retinal rod rhodopsin-sensitive cGMP 3',5'-cyclic phosphodiesterase subunit delta (PDE6D) of Bos taurus (Bovine).